A 277-amino-acid chain; its full sequence is Indole-3-glycerol phosphate synthase (277 aa).

It belongs to the TrpC family.

The enzyme catalyses 1-(2-carboxyphenylamino)-1-deoxy-D-ribulose 5-phosphate + H(+) = (1S,2R)-1-C-(indol-3-yl)glycerol 3-phosphate + CO2 + H2O. It participates in amino-acid biosynthesis; L-tryptophan biosynthesis; L-tryptophan from chorismate: step 4/5. This Pseudomonas putida (strain ATCC 700007 / DSM 6899 / JCM 31910 / BCRC 17059 / LMG 24140 / F1) protein is Indole-3-glycerol phosphate synthase.